The sequence spans 495 residues: MTTRAKPSKLIKGATGDFEIVIGMEIHAQVTSRSKLFSGASTEFGGEPNAHVSLVDAAMPGMLPVINQECVAQAVRTGLGLEAQINLRSVFDRKNYFYPDLPQGYQISQYKSPIVGEGVVAVDVSPTEQIKVGIERLHLEQDAGKSLHDQSATESLVDLNRSGVALMEIVSKPDMRSSDEARAYVTKLRTILRYIGSCDGNMEQGSLRADVNVSVRRPGEPLGTRCEIKNVNSIRFIGQAIEVEARRQIGVIEDGGVVQQETRLFDPGRGETRSMRSKEEAHDYRYFPDPDLLPLEFDQAYVDGLKAGLPELPDAKKERFIAEYGLPAYDAGVLVADKETADYYEAAVRHGGAKRDPKLVANWLTGDVAAYANSVGLSVAQTHIKPGQIASLVDLIADGTISGKIAKDVLSILIAEEKDADPKDIVEARGLRQVTDTGAIAAAVDAIIKANPDKVAQAQAKPSMLGWFVGQVMKQTGGKANPQAVNDELKAKLGI.

Belongs to the GatB/GatE family. GatB subfamily. As to quaternary structure, heterotrimer of A, B and C subunits.

It carries out the reaction L-glutamyl-tRNA(Gln) + L-glutamine + ATP + H2O = L-glutaminyl-tRNA(Gln) + L-glutamate + ADP + phosphate + H(+). The enzyme catalyses L-aspartyl-tRNA(Asn) + L-glutamine + ATP + H2O = L-asparaginyl-tRNA(Asn) + L-glutamate + ADP + phosphate + 2 H(+). In terms of biological role, allows the formation of correctly charged Asn-tRNA(Asn) or Gln-tRNA(Gln) through the transamidation of misacylated Asp-tRNA(Asn) or Glu-tRNA(Gln) in organisms which lack either or both of asparaginyl-tRNA or glutaminyl-tRNA synthetases. The reaction takes place in the presence of glutamine and ATP through an activated phospho-Asp-tRNA(Asn) or phospho-Glu-tRNA(Gln). The sequence is that of Aspartyl/glutamyl-tRNA(Asn/Gln) amidotransferase subunit B from Methylocella silvestris (strain DSM 15510 / CIP 108128 / LMG 27833 / NCIMB 13906 / BL2).